A 78-amino-acid chain; its full sequence is Large ribosomal subunit protein bL28 (78 aa).

Belongs to the bacterial ribosomal protein bL28 family.

This is Large ribosomal subunit protein bL28 from Pectobacterium carotovorum subsp. carotovorum (strain PC1).